The primary structure comprises 344 residues: Methionine import ATP-binding protein MetN (344 aa).

The 240-residue stretch at 2–241 (IEINQVNKVF…PKTELAHDFI (240 aa)) folds into the ABC transporter domain. ATP is bound at residue 38–45 (GSSGAGKS).

It belongs to the ABC transporter superfamily. Methionine importer (TC 3.A.1.24) family. As to quaternary structure, the complex is composed of two ATP-binding proteins (MetN), two transmembrane proteins (MetI) and a solute-binding protein (MetQ).

Its subcellular location is the cell inner membrane. The catalysed reaction is L-methionine(out) + ATP + H2O = L-methionine(in) + ADP + phosphate + H(+). The enzyme catalyses D-methionine(out) + ATP + H2O = D-methionine(in) + ADP + phosphate + H(+). Its function is as follows. Part of the ABC transporter complex MetNIQ involved in methionine import. Responsible for energy coupling to the transport system. This chain is Methionine import ATP-binding protein MetN, found in Vibrio vulnificus (strain CMCP6).